An 845-amino-acid chain; its full sequence is uncharacterized protein (845 aa).

Residues Ser224–Gly241 are compositionally biased toward polar residues. 7 disordered regions span residues Ser224–Glu244, Gln324–Gly346, Arg383–Ala434, Val456–Asn485, Asn519–Ser619, Val674–Pro701, and Arg739–Ser785. Residues Pro390–Gln399 show a composition bias toward basic and acidic residues. Over residues Ser400 to Lys422 the composition is skewed to polar residues. Residues Asn534 to Asn546 are compositionally biased toward basic and acidic residues. A compositionally biased stretch (low complexity) spans Ser563–Leu576. Phosphoserine is present on Ser567. Basic and acidic residues-rich tracts occupy residues Ala579 to Cys588 and Ala600 to Ile614. Polar residues-rich tracts occupy residues Val674–Lys683, Ser691–Pro701, and Ala743–Ala760.

It localises to the mitochondrion. This is an uncharacterized protein from Schizosaccharomyces pombe (strain 972 / ATCC 24843) (Fission yeast).